The primary structure comprises 395 residues: Type II restriction enzyme BsuFI (395 aa).

As to quaternary structure, homodimer. The cofactor is Mg(2+).

It catalyses the reaction Endonucleolytic cleavage of DNA to give specific double-stranded fragments with terminal 5'-phosphates.. A P subtype restriction enzyme that recognizes the double-stranded sequence 5'-CCGG-3' and cleaves after C-1. This chain is Type II restriction enzyme BsuFI (hsdFR), found in Bacillus subtilis.